The sequence spans 2472 residues: Spectrin alpha chain, non-erythrocytic 1 (2472 aa).

An N-acetylmethionine modification is found at methionine 1. Spectrin repeat units follow at residues 45–146, 150–251, 256–358, 361–465, 468–570, 574–676, 679–781, 785–888, and 891–961; these read RFQF…IKLL, KLVQ…QGKL, EVQR…ARLD, YRLQ…QYEQ, DLQL…AQLA, HLQQ…KLRE, QQQQ…QKLA, RLQQ…DLED, and QAQQ…QQVA. Serine 587 carries the post-translational modification Phosphoserine. Lysine 637 is modified (N6-acetyllysine). An N6-acetyllysine modification is found at lysine 803. Serine 924, serine 982, serine 999, serine 1029, serine 1031, and serine 1041 each carry phosphoserine. The SH3 domain maps to 967–1026; sequence TGKELVLALYDYQEKSPREVTMKKGDILTLLNSTNKDWWKVEVNDRQGFVPAAYVKKLDP. A Spectrin 10 repeat occupies 1096–1166; it reads LFREANELQQ…LESEGLMAEE (71 aa). Position 1176 is a phosphotyrosine (tyrosine 1176). Residues serine 1190, serine 1207, serine 1217, serine 1291, serine 1306, serine 1323, and serine 1338 each carry the phosphoserine modification. The stretch at 1233–1336 is one Spectrin 11 repeat; that stretch reads HEVQRFHRDA…RADQRKAKLG (104 aa). Spectrin repeat units follow at residues 1339-1441 and 1446-1549; these read HDLQ…RMML and ELQL…KLGE. The residue at position 1519 (lysine 1519) is an N6-acetyllysine. Phosphoserine is present on residues serine 1550, serine 1557, serine 1578, serine 1615, and serine 1647. 7 Spectrin repeats span residues 1552–1656, 1659–1762, 1764–1868, 1871–1974, 1978–2081, 2092–2194, and 2206–2310; these read TLQQ…KLKE, KQQN…KLSE, HRLH…RLEE, EYQQ…KLDE, FLQF…KLLE, LFLT…LELQ, and LRQE…NLEQ. Threonine 2020 is modified (phosphothreonine). Position 2052 is an N6-acetyllysine (lysine 2052). Threonine 2066 carries the phosphothreonine modification. EF-hand domains follow at residues 2323 to 2358, 2366 to 2401, and 2404 to 2439; these read EALKEFSMMFKHFDKDKSGRLNHQEFKSCLRSLGYD, EPDPEFEAILDTVDPNRDGHVSLQEYMAFMISRETE, and KSSEEIESAFRALSSEGKPYVTKEELYQNLTREQAD. Ca(2+) contacts are provided by aspartate 2336, aspartate 2338, serine 2340, arginine 2342, glutamate 2347, aspartate 2379, asparagine 2381, aspartate 2383, histidine 2385, and glutamate 2390. Lysine 2421 is modified (N6-acetyllysine).

The protein belongs to the spectrin family. In terms of assembly, like erythrocyte spectrin, the spectrin-like proteins are capable of forming dimers which can further associate to tetramers. Interacts (via C-terminal spectrin repeats) with TRPC4. Interacts with CALM and EMD. Interacts with isoform 1 of ACP1. Identified in a complex with ACTN4, CASK, IQGAP1, MAGI2, NPHS1 and SPTBN1. Interacts with SHANK3 (via ANK repeats). Interacts with CLN3; this interaction regulates the fodrin localization at the plasma membrane. In terms of processing, phosphorylation of Tyr-1176 decreases sensitivity to cleavage by calpain in vitro.

The protein localises to the cytoplasm. The protein resides in the cytoskeleton. It localises to the cell cortex. Fodrin, which seems to be involved in secretion, interacts with calmodulin in a calcium-dependent manner and is thus candidate for the calcium-dependent movement of the cytoskeleton at the membrane. This is Spectrin alpha chain, non-erythrocytic 1 (Sptan1) from Mus musculus (Mouse).